The sequence spans 309 residues: Porphobilinogen deaminase (309 aa).

C234 bears the S-(dipyrrolylmethanemethyl)cysteine mark.

The protein belongs to the HMBS family. Monomer. Dipyrromethane is required as a cofactor.

The enzyme catalyses 4 porphobilinogen + H2O = hydroxymethylbilane + 4 NH4(+). Its pathway is porphyrin-containing compound metabolism; protoporphyrin-IX biosynthesis; coproporphyrinogen-III from 5-aminolevulinate: step 2/4. In terms of biological role, tetrapolymerization of the monopyrrole PBG into the hydroxymethylbilane pre-uroporphyrinogen in several discrete steps. This is Porphobilinogen deaminase (hemC) from Mycobacterium bovis (strain ATCC BAA-935 / AF2122/97).